Here is a 208-residue protein sequence, read N- to C-terminus: Ribosomal RNA small subunit methyltransferase G (208 aa).

Residues Gly76, Leu81, 127-128, and Arg142 each bind S-adenosyl-L-methionine; that span reads VE.

It belongs to the methyltransferase superfamily. RNA methyltransferase RsmG family.

The protein localises to the cytoplasm. The catalysed reaction is guanosine(527) in 16S rRNA + S-adenosyl-L-methionine = N(7)-methylguanosine(527) in 16S rRNA + S-adenosyl-L-homocysteine. Functionally, specifically methylates the N7 position of guanine in position 527 of 16S rRNA. This Legionella pneumophila (strain Lens) protein is Ribosomal RNA small subunit methyltransferase G.